Consider the following 362-residue polypeptide: Chorismate synthase (362 aa).

Positions 48 and 54 each coordinate NADP(+). Residues 125-127 (RSS), 241-242 (NA), Gly-286, 301-305 (KPTSS), and Arg-327 each bind FMN.

It belongs to the chorismate synthase family. As to quaternary structure, homotetramer. Requires FMNH2 as cofactor.

The enzyme catalyses 5-O-(1-carboxyvinyl)-3-phosphoshikimate = chorismate + phosphate. It functions in the pathway metabolic intermediate biosynthesis; chorismate biosynthesis; chorismate from D-erythrose 4-phosphate and phosphoenolpyruvate: step 7/7. Functionally, catalyzes the anti-1,4-elimination of the C-3 phosphate and the C-6 proR hydrogen from 5-enolpyruvylshikimate-3-phosphate (EPSP) to yield chorismate, which is the branch point compound that serves as the starting substrate for the three terminal pathways of aromatic amino acid biosynthesis. This reaction introduces a second double bond into the aromatic ring system. The polypeptide is Chorismate synthase (Paramagnetospirillum magneticum (strain ATCC 700264 / AMB-1) (Magnetospirillum magneticum)).